We begin with the raw amino-acid sequence, 284 residues long: Phosphatidylserine decarboxylase proenzyme (284 aa).

Active-site charge relay system; for autoendoproteolytic cleavage activity residues include Asp-88, His-145, and Ser-248. Catalysis depends on Ser-248, which acts as the Schiff-base intermediate with substrate; via pyruvic acid; for decarboxylase activity. Ser-248 is subject to Pyruvic acid (Ser); by autocatalysis.

The protein belongs to the phosphatidylserine decarboxylase family. PSD-B subfamily. Prokaryotic type I sub-subfamily. Heterodimer of a large membrane-associated beta subunit and a small pyruvoyl-containing alpha subunit. Requires pyruvate as cofactor. In terms of processing, is synthesized initially as an inactive proenzyme. Formation of the active enzyme involves a self-maturation process in which the active site pyruvoyl group is generated from an internal serine residue via an autocatalytic post-translational modification. Two non-identical subunits are generated from the proenzyme in this reaction, and the pyruvate is formed at the N-terminus of the alpha chain, which is derived from the carboxyl end of the proenzyme. The autoendoproteolytic cleavage occurs by a canonical serine protease mechanism, in which the side chain hydroxyl group of the serine supplies its oxygen atom to form the C-terminus of the beta chain, while the remainder of the serine residue undergoes an oxidative deamination to produce ammonia and the pyruvoyl prosthetic group on the alpha chain. During this reaction, the Ser that is part of the protease active site of the proenzyme becomes the pyruvoyl prosthetic group, which constitutes an essential element of the active site of the mature decarboxylase.

The protein localises to the cell membrane. The enzyme catalyses a 1,2-diacyl-sn-glycero-3-phospho-L-serine + H(+) = a 1,2-diacyl-sn-glycero-3-phosphoethanolamine + CO2. Its pathway is phospholipid metabolism; phosphatidylethanolamine biosynthesis; phosphatidylethanolamine from CDP-diacylglycerol: step 2/2. Its function is as follows. Catalyzes the formation of phosphatidylethanolamine (PtdEtn) from phosphatidylserine (PtdSer). The chain is Phosphatidylserine decarboxylase proenzyme from Albidiferax ferrireducens (strain ATCC BAA-621 / DSM 15236 / T118) (Rhodoferax ferrireducens).